The sequence spans 148 residues: Endothelial differentiation-related factor 1 (148 aa).

Position 2 is an N-acetylalanine (Ala-2). Ser-4 is subject to Phosphoserine. At Lys-25 the chain carries N6-methyllysine. Positions Arg-34 to Glu-67 are disordered. The tract at residues Asp-37–Arg-113 is interaction with NR5A2, PPARG and NR1H3. The span at Gln-48–Thr-58 shows a compositional bias: polar residues. An interaction with TBP and NR5A1 region spans residues His-69 to Asp-108. Residues Ile-81–Lys-88 carry the IQ motif motif. In terms of domain architecture, HTH cro/C1-type spans Ile-81–Lys-135. Positions Gln-92–Ser-111 form a DNA-binding region, H-T-H motif.

Interacts with TBP and the transcription factor IID (TFIID) complex, NR5A2, NR1H3 and PPARG. Interaction with TBP is regulated by phosphorylation. Binds NR5A1, ATF1, FOS and JUN via their conserved basic region. Binding to calmodulin is regulated by calcium and phosphorylation of the IQ motif. Phosphorylated. Expressed in brain, liver, kidney and heart (at protein level). Also expressed in testis.

The protein resides in the cytoplasm. Its subcellular location is the nucleus. Transcriptional coactivator stimulating NR5A1 and ligand-dependent NR1H3/LXRA and PPARG transcriptional activities. Enhances the DNA-binding activity of ATF1, ATF2, CREB1 and NR5A1. Regulates nitric oxid synthase activity probably by sequestering calmodulin in the cytoplasm. Might function in endothelial cells differentiation, hormone-induced cardiomyocytes hypertrophy and lipid metabolism. This is Endothelial differentiation-related factor 1 (Edf1) from Mus musculus (Mouse).